The sequence spans 800 residues: Protein translocase subunit SecA (800 aa).

ATP is bound by residues Gln85, 103–107, and Asp504; that span reads GEGKT.

This sequence belongs to the SecA family. In terms of assembly, monomer and homodimer. Part of the essential Sec protein translocation apparatus which comprises SecA, SecYEG and auxiliary proteins SecDF. Other proteins may also be involved.

It localises to the cell membrane. The protein resides in the cytoplasm. It catalyses the reaction ATP + H2O + cellular proteinSide 1 = ADP + phosphate + cellular proteinSide 2.. Its function is as follows. Part of the Sec protein translocase complex. Interacts with the SecYEG preprotein conducting channel. Has a central role in coupling the hydrolysis of ATP to the transfer of proteins into and across the cell membrane, serving as an ATP-driven molecular motor driving the stepwise translocation of polypeptide chains across the membrane. The chain is Protein translocase subunit SecA from Lactobacillus delbrueckii subsp. bulgaricus (strain ATCC 11842 / DSM 20081 / BCRC 10696 / JCM 1002 / NBRC 13953 / NCIMB 11778 / NCTC 12712 / WDCM 00102 / Lb 14).